A 970-amino-acid polypeptide reads, in one-letter code: Protein CLASP-3 (970 aa).

Disordered regions lie at residues 314–377 and 651–675; these read SRLA…QKAR and NGIS…ETPH. Over residues 344-355 the composition is skewed to polar residues; that stretch reads GSRTRTSSITSN. Residues 905-943 form an HEAT repeat; it reads ITPCVIKAYQSTSSSVRKTVVYCLVAMVNRVGEQRMAPH.

It belongs to the CLASP family.

The protein resides in the cytoplasm. Its subcellular location is the cytoskeleton. Microtubule plus-end tracking protein that promotes the stabilization of dynamic microtubules. The sequence is that of Protein CLASP-3 (cls-3) from Caenorhabditis briggsae.